The chain runs to 147 residues: Vasopressin-neurophysin 2-copeptin (147 aa).

Cys1 and Cys6 are disulfide-bonded. A Glycine amide modification is found at Gly9. Intrachain disulfides connect Cys22/Cys66, Cys25/Cys39, Cys33/Cys56, Cys40/Cys46, Cys73/Cys85, Cys79/Cys97, and Cys86/Cys91. Residue Asn114 is glycosylated (N-linked (GlcNAc...) asparagine).

Belongs to the vasopressin/oxytocin family. In terms of assembly, interacts with vasopressin receptors V1bR/AVPR1B (Ki=85 pM), V1aR/AVPR1A (Ki=0.6 nM) and V2R/AVPR2 (Ki=4.9 nM). Interacts with oxytocin receptor (OXTR) (Ki=110 nM).

It is found in the secreted. Functionally, neurophysin 2 specifically binds vasopressin. Its function is as follows. Vasopressin has a direct antidiuretic action on the kidney, it also causes vasoconstriction of the peripheral vessels. Acts by binding to vasopressin receptors (V1bR/AVPR1B, V1aR/AVPR1A, and V2R/AVPR2). The chain is Vasopressin-neurophysin 2-copeptin (AVP) from Ovis aries (Sheep).